Consider the following 173-residue polypeptide: Ribosome maturation factor RimM (173 aa).

One can recognise a PRC barrel domain in the interval 98–170 (VGDMTWDSFI…SLTVSLPEGL (73 aa)).

Belongs to the RimM family. Binds ribosomal protein uS19.

It is found in the cytoplasm. Functionally, an accessory protein needed during the final step in the assembly of 30S ribosomal subunit, possibly for assembly of the head region. Essential for efficient processing of 16S rRNA. May be needed both before and after RbfA during the maturation of 16S rRNA. It has affinity for free ribosomal 30S subunits but not for 70S ribosomes. This Parabacteroides distasonis (strain ATCC 8503 / DSM 20701 / CIP 104284 / JCM 5825 / NCTC 11152) protein is Ribosome maturation factor RimM.